We begin with the raw amino-acid sequence, 512 residues long: Calcium-dependent protein kinase 18 (512 aa).

Residues 1–25 (MGLCSSSSARRDAGTPGGGNGAGNK) form a disordered region. Residue Gly2 is the site of N-myristoyl glycine attachment. Residues 52–312 (YALGKLLGHG…AAQALSHEWV (261 aa)) form the Protein kinase domain. Residues 58–66 (LGHGQFGYT) and Lys81 contribute to the ATP site. Asp178 functions as the Proton acceptor in the catalytic mechanism. The autoinhibitory domain stretch occupies residues 318–348 (ASDIPLDISVLHNMRQFVKYSRFKQFALRAL). 4 consecutive EF-hand domains span residues 355 to 390 (EELSDLRDQFNAIDVDKNGTISLEELKQALAKDVPW), 392 to 427 (LKGPRVLEIVEAIDSNTDGLVDFEEFVAATLHVHQL), 434 to 469 (KWKSLSQAAFDKFDVDGDGYITSDELRMQTGLKGSI), and 472 to 499 (LLEEADIDRDGKISLDEFRRLLKTASMS). The Ca(2+) site is built by Asp368, Asp370, Asn372, Thr374, Glu379, Asp405, Asn407, Asp409, Glu416, Asp447, Asp449, Asp451, Tyr453, Glu458, Asp477, Asp479, Asp481, Lys483, and Glu488.

Belongs to the protein kinase superfamily. Ser/Thr protein kinase family. CDPK subfamily. As to quaternary structure, interacts with MPK5. In terms of processing, autophosphorylated. Phosphorylated by MPK5.

It is found in the cell membrane. The catalysed reaction is L-seryl-[protein] + ATP = O-phospho-L-seryl-[protein] + ADP + H(+). It catalyses the reaction L-threonyl-[protein] + ATP = O-phospho-L-threonyl-[protein] + ADP + H(+). Activated by calcium. Autophosphorylation may play an important role in the regulation of the kinase activity. Its function is as follows. May play a role in signal transduction pathways that involve calcium as a second messenger. Functions upstream of MPK5 in a signaling pathway that represses defense gene expression and negatively regulates resistance to rice blast fungus. Phosphorylates MPK5 at Thr-14 and Thr-32 and activates MPK5 independently of MAP kinase kinase (MKK) phosphorylation. May be involved in arbuscular mycorrhizal presymbiotic phase signaling. Phosphorylates the elicitor-responsive protein ERG1 in vitro. Phosphorylation is calcium-dependent. The protein is Calcium-dependent protein kinase 18 of Oryza sativa subsp. japonica (Rice).